A 225-amino-acid chain; its full sequence is Ribosome maturation factor RimM (225 aa).

Positions 144-225 constitute a PRC barrel domain; it reads ADEFYWVDLI…RIVVDWEADY (82 aa).

The protein belongs to the RimM family. In terms of assembly, binds ribosomal protein uS19.

Its subcellular location is the cytoplasm. In terms of biological role, an accessory protein needed during the final step in the assembly of 30S ribosomal subunit, possibly for assembly of the head region. Essential for efficient processing of 16S rRNA. May be needed both before and after RbfA during the maturation of 16S rRNA. It has affinity for free ribosomal 30S subunits but not for 70S ribosomes. The sequence is that of Ribosome maturation factor RimM from Burkholderia vietnamiensis (strain G4 / LMG 22486) (Burkholderia cepacia (strain R1808)).